The primary structure comprises 367 residues: Glutamate 5-kinase (367 aa).

Residue K10 coordinates ATP. S50, D137, and N149 together coordinate substrate. Residues 169 to 170 (TD) and 211 to 217 (TGGMGTK) each bind ATP. Residues 275–353 (AGEITVDDGA…QEISEILGYE (79 aa)) form the PUA domain.

It belongs to the glutamate 5-kinase family.

It is found in the cytoplasm. It carries out the reaction L-glutamate + ATP = L-glutamyl 5-phosphate + ADP. The protein operates within amino-acid biosynthesis; L-proline biosynthesis; L-glutamate 5-semialdehyde from L-glutamate: step 1/2. Its function is as follows. Catalyzes the transfer of a phosphate group to glutamate to form L-glutamate 5-phosphate. The chain is Glutamate 5-kinase from Serratia proteamaculans (strain 568).